Consider the following 118-residue polypeptide: Beta-2-microglobulin (118 aa).

Residues 1–20 form the signal peptide; that stretch reads MARVVALVLLGLLSLTGLEA. The 94-residue stretch at 22–115 folds into the Ig-like C1-type domain; sequence PRVPKVQVYS…LKDPLIVKWD (94 aa). A disulfide bridge links cysteine 45 with cysteine 99.

Belongs to the beta-2-microglobulin family. Heterodimer of an alpha chain and a beta chain. Beta-2-microglobulin is the beta-chain of major histocompatibility complex class I molecules.

The protein resides in the secreted. Component of the class I major histocompatibility complex (MHC). Involved in the presentation of peptide antigens to the immune system. The polypeptide is Beta-2-microglobulin (B2M) (Equus caballus (Horse)).